Consider the following 785-residue polypeptide: Probable serine protease Ga0098714_109514 (785 aa).

Basic and acidic residues-rich tracts occupy residues 470 to 481 (LDHGKNGREGGR) and 491 to 501 (DGPEHPNHYAD). Disordered regions lie at residues 470 to 503 (LDHG…ADID) and 608 to 629 (DGDA…EEVS).

It belongs to the peptidase S1 family.

Probably a dedicated protease for substrate gasdermin bGSDM; cleaves the bGSDM precursor, releasing the pore-forming moiety, which integrates into the membrane and triggers cell death. Involved in defense against bacteriophages. Expression of gasdermin bGSDM and this neighboring protease is toxic in E.coli on solid medium. The sequence is that of Probable serine protease Ga0098714_109514 from Bradyrhizobium tropiciagri.